The sequence spans 301 residues: Probable aspartoacylase (301 aa).

Residues His-13 and Glu-16 each contribute to the Zn(2+) site. Substrate is bound by residues Arg-54 and 61-62; that span reads NR. His-105 is a Zn(2+) binding site. The substrate site is built by Glu-163 and Tyr-273.

Belongs to the AspA/AstE family. Aspartoacylase subfamily. Zn(2+) is required as a cofactor.

The enzyme catalyses an N-acyl-L-aspartate + H2O = a carboxylate + L-aspartate. The polypeptide is Probable aspartoacylase (Prochlorococcus marinus (strain AS9601)).